Here is a 205-residue protein sequence, read N- to C-terminus: MQRGKFITIDGVEGSGKSTQIDFICDYLVTKKINVILTREPGGTELGEKIRTLLLSTDIQSIHGDTELLLLFAARNEHIRTKIIPSLEKGDWVLSDRFTDASYAYQGGGRGLSIERITQLEKWVLQDFTPDVTLLLDVSVALGMSRVESRGRKDRIELETNDFFKRVRNSYIERSKQFPKRIKLIDASKTLEQTAQQIKIILQVL.

Residue 11–18 (GVEGSGKS) coordinates ATP.

Belongs to the thymidylate kinase family.

It carries out the reaction dTMP + ATP = dTDP + ADP. Phosphorylation of dTMP to form dTDP in both de novo and salvage pathways of dTTP synthesis. The protein is Thymidylate kinase of Ruthia magnifica subsp. Calyptogena magnifica.